A 476-amino-acid chain; its full sequence is Glycogen synthase (476 aa).

Residue Lys15 participates in ADP-alpha-D-glucose binding.

This sequence belongs to the glycosyltransferase 1 family. Bacterial/plant glycogen synthase subfamily.

It carries out the reaction [(1-&gt;4)-alpha-D-glucosyl](n) + ADP-alpha-D-glucose = [(1-&gt;4)-alpha-D-glucosyl](n+1) + ADP + H(+). It functions in the pathway glycan biosynthesis; glycogen biosynthesis. Synthesizes alpha-1,4-glucan chains using ADP-glucose. The polypeptide is Glycogen synthase (glgA) (Haemophilus influenzae (strain ATCC 51907 / DSM 11121 / KW20 / Rd)).